Consider the following 129-residue polypeptide: Large ribosomal subunit protein bL17 (129 aa).

Belongs to the bacterial ribosomal protein bL17 family. In terms of assembly, part of the 50S ribosomal subunit. Contacts protein L32.

In Yersinia enterocolitica serotype O:8 / biotype 1B (strain NCTC 13174 / 8081), this protein is Large ribosomal subunit protein bL17.